Reading from the N-terminus, the 496-residue chain is Glutamyl-tRNA(Gln) amidotransferase subunit A (496 aa).

Active-site charge relay system residues include lysine 75 and serine 150. Catalysis depends on serine 174, which acts as the Acyl-ester intermediate.

The protein belongs to the amidase family. GatA subfamily. In terms of assembly, heterotrimer of A, B and C subunits.

It catalyses the reaction L-glutamyl-tRNA(Gln) + L-glutamine + ATP + H2O = L-glutaminyl-tRNA(Gln) + L-glutamate + ADP + phosphate + H(+). Its function is as follows. Allows the formation of correctly charged Gln-tRNA(Gln) through the transamidation of misacylated Glu-tRNA(Gln) in organisms which lack glutaminyl-tRNA synthetase. The reaction takes place in the presence of glutamine and ATP through an activated gamma-phospho-Glu-tRNA(Gln). This chain is Glutamyl-tRNA(Gln) amidotransferase subunit A, found in Burkholderia pseudomallei (strain 1106a).